Reading from the N-terminus, the 252-residue chain is MEEWLRKHMWPALPDHQHHPSYDILLAEPWVQFLDMTPFFRQKLYNTLSKINEMRKSCIIYPPQAEIMSWSYLCAPEDVKVVIIGQDPYHGGQANGQAFSVNKGFPVPPSLQNIFKEVRSCYPDFVSPGHGCLEEWGRQGVLLLNTILTVEAKKPGSHSDLGWTWFTNLIISTLSNKLNNCVFMLWGSKAIAKSLMINKQRHLVLKAQHPSPLAAKNNYSSSQCKFLGCGHFLTANKYLTQHNKVPIDWTLE.

Asp87 serves as the catalytic Proton acceptor.

The protein belongs to the uracil-DNA glycosylase (UDG) superfamily. UNG family.

The protein resides in the host nucleus. It carries out the reaction Hydrolyzes single-stranded DNA or mismatched double-stranded DNA and polynucleotides, releasing free uracil.. Its function is as follows. Excises uracil residues from the DNA which can arise as a result of misincorporation of dUMP residues by DNA polymerase or deamination of cytosines. Therefore may reduce deleterious uracil incorporation into the viral genome, particularly in terminally differentiated cells which lack DNA repair enzymes. This is Uracil-DNA glycosylase (46) from Alcelaphine herpesvirus 1 (strain C500) (AlHV-1).